We begin with the raw amino-acid sequence, 184 residues long: Ribosome-recycling factor (184 aa).

The protein belongs to the RRF family.

The protein localises to the cytoplasm. Its function is as follows. Responsible for the release of ribosomes from messenger RNA at the termination of protein biosynthesis. May increase the efficiency of translation by recycling ribosomes from one round of translation to another. In Aster yellows witches'-broom phytoplasma (strain AYWB), this protein is Ribosome-recycling factor.